A 505-amino-acid chain; its full sequence is GMP synthase [glutamine-hydrolyzing] (505 aa).

Residues 3 to 190 (KVLVVNFGGQ…LRKIARISDV (188 aa)) form the Glutamine amidotransferase type-1 domain. Catalysis depends on Cys-80, which acts as the Nucleophile. Residues His-164 and Glu-166 contribute to the active site. Residues 191–380 (WRPEDQITRI…LGLPEDVVYR (190 aa)) enclose the GMPS ATP-PPase domain. Residue 218–224 (SGGVDST) coordinates ATP.

It carries out the reaction XMP + L-glutamine + ATP + H2O = GMP + L-glutamate + AMP + diphosphate + 2 H(+). It functions in the pathway purine metabolism; GMP biosynthesis; GMP from XMP (L-Gln route): step 1/1. In terms of biological role, catalyzes the synthesis of GMP from XMP. The sequence is that of GMP synthase [glutamine-hydrolyzing] from Pyrobaculum aerophilum (strain ATCC 51768 / DSM 7523 / JCM 9630 / CIP 104966 / NBRC 100827 / IM2).